The following is a 91-amino-acid chain: Small ribosomal subunit protein bS20 (91 aa).

Disordered regions lie at residues 1 to 26 (MALRHKSAQKRHRQSLKRRMLNRSRK) and 67 to 91 (HKNAAARKKSRLAKAINRVKAAQQS).

It belongs to the bacterial ribosomal protein bS20 family.

Binds directly to 16S ribosomal RNA. The sequence is that of Small ribosomal subunit protein bS20 from Deinococcus deserti (strain DSM 17065 / CIP 109153 / LMG 22923 / VCD115).